The sequence spans 2053 residues: Cell adhesion molecule DSCAML1 (2053 aa).

An N-terminal signal peptide occupies residues 1 to 18; that stretch reads MWLVTFLLLLDSLHKARP. 9 Ig-like C2-type domains span residues 19 to 119, 115 to 217, 226 to 306, 314 to 402, 408 to 501, 506 to 586, 596 to 685, 690 to 784, and 788 to 885; these read EDVG…NIRV, PNIR…ARLS, PTIL…AEAT, PLHV…AIIA, PRIV…ARIN, PSIR…LSIS, PPLI…RQLI, PRFV…MFLT, and PAMI…LTVQ. Over 19-1591 the chain is Extracellular; the sequence is EDVGTSLYFV…AQGEGDDVKK (1573 aa). 2 N-linked (GlcNAc...) asparagine glycosylation sites follow: asparagine 29 and asparagine 79. 5 cysteine pairs are disulfide-bonded: cysteine 47-cysteine 103, cysteine 146-cysteine 198, cysteine 247-cysteine 294, cysteine 336-cysteine 386, and cysteine 429-cysteine 485. N-linked (GlcNAc...) asparagine glycosylation is found at asparagine 368, asparagine 471, asparagine 513, asparagine 556, asparagine 666, asparagine 710, asparagine 749, asparagine 796, and asparagine 809. 2 cysteine pairs are disulfide-bonded: cysteine 526/cysteine 575 and cysteine 617/cysteine 669. Cysteine 711 and cysteine 767 are oxidised to a cystine. Cysteine 810 and cysteine 867 are oxidised to a cystine. Fibronectin type-III domains follow at residues 887–984, 989–1088, 1093–1189, and 1193–1288; these read PPDP…TEEA, PPMD…TLED, PPEN…TKED, and PPAG…AGKA. N-linked (GlcNAc...) asparagine glycans are attached at residues asparagine 926, asparagine 1082, asparagine 1144, asparagine 1162, asparagine 1275, and asparagine 1345. Residues 1278–1377 enclose the Ig-like C2-type 10 domain; it reads EKVTIEPAGK…TGGFDTIIVN (100 aa). Residues cysteine 1311 and cysteine 1363 are joined by a disulfide bond. Fibronectin type-III domains are found at residues 1383–1477 and 1478–1578; these read PPDQ…THGR and EPSF…TIPP. 3 N-linked (GlcNAc...) asparagine glycosylation sites follow: asparagine 1492, asparagine 1531, and asparagine 1561. Residues 1592–1612 form a helical membrane-spanning segment; that stretch reads LFTIGCPVILATLGVALLFIV. Over 1613–2053 the chain is Cytoplasmic; sequence RKKRKEKRLK…GAYSKSYTLV (441 aa). 4 disordered regions span residues 1715-1741, 1773-1803, 1840-1862, and 1974-2053; these read PLID…HSTR, HGVT…STES, SSDQ…STPS, and LAMP…YTLV. Positions 1732–1741 are enriched in basic residues; sequence KNVKSAHSTR. Polar residues predominate over residues 1773 to 1789; it reads HGVTVTESDSYSASLSQ. A compositionally biased stretch (pro residues) spans 1977-2009; the sequence is PAPPAGTAPPAPGPTPAEPPTAPSAAPPAPSTE. Residues 2029–2041 are compositionally biased toward polar residues; the sequence is EMSTSGVGRSQKQ.

Homodimer; mediates homophilic interactions to promote cell adhesion. As to expression, detected in heart, liver, pancreas, skeletal muscle, kidney and in brain, in particular in the amygdala, caudate nucleus, corpus callosum, hippocampus, substantia nigra, thalamus and subthalamus.

The protein localises to the cell membrane. It is found in the synapse. Its function is as follows. Cell adhesion molecule that plays a role in neuronal self-avoidance. Promotes repulsion between specific neuronal processes of either the same cell or the same subtype of cells. Promotes both isoneuronal self-avoidance for creating an orderly neurite arborization in retinal rod bipolar cells and heteroneuronal self-avoidance to maintain mosaic spacing between AII amacrine cells. Adhesion molecule that promotes lamina-specific synaptic connections in the retina: expressed in specific subsets of interneurons and retinal ganglion cells (RGCs) and promotes synaptic connectivity via homophilic interactions. In Homo sapiens (Human), this protein is Cell adhesion molecule DSCAML1 (DSCAML1).